Here is a 336-residue protein sequence, read N- to C-terminus: Nucleoid-associated protein Spro_3255 (336 aa).

Belongs to the YejK family.

The protein localises to the cytoplasm. The protein resides in the nucleoid. The protein is Nucleoid-associated protein Spro_3255 of Serratia proteamaculans (strain 568).